A 745-amino-acid chain; its full sequence is Meiotic driver SPOK3 (745 aa).

Positions 4–34 (KDRITQLLRELEEAKAREAQERCEKERLQLE) form a coiled coil. Disordered stretches follow at residues 173–222 (ELTQ…DGVG) and 407–487 (LSSA…VDPQ). Basic and acidic residues predominate over residues 188 to 197 (TSDRSLERRQ). 2 stretches are compositionally biased toward polar residues: residues 208–217 (KSKYICSNRQ) and 409–422 (SAPS…SEYT). Residues 214 to 325 (SNRQPDGVGI…LLLYVDRDDW (112 aa)) are required for antidote activity. Over residues 466-482 (AKRERGPSSGGKDDGRS) the composition is skewed to basic and acidic residues. A required for poison activity region spans residues 491–745 (QYCTQACLLG…SPMATPSHGG (255 aa)).

Its subcellular location is the cytoplasm. The protein resides in the nucleus. Promotes unequal transmission of alleles from the parental zygote to progeny spores by acting as poison/antidote system, leading to poisoning of progeny that do not inherit the allele. May possess DNA nuclease activity that leads to spore killing, and a kinase activity that confers resistance to the nuclease activity. This is Meiotic driver SPOK3 from Podospora anserina (Pleurage anserina).